The primary structure comprises 379 residues: Probable RNA methyltransferase RB6963 (379 aa).

Residue E89 is the Proton acceptor of the active site. The 237-residue stretch at 96–332 (ATGRTTLCVS…VRYSLGNDIE (237 aa)) folds into the Radical SAM core domain. A disulfide bridge connects residues C103 and C335. [4Fe-4S] cluster contacts are provided by C110, C114, and C117. S-adenosyl-L-methionine is bound by residues 160 to 161 (GE), S192, 215 to 217 (SLH), and N291. The active-site S-methylcysteine intermediate is C335.

Belongs to the radical SAM superfamily. RlmN family. Requires [4Fe-4S] cluster as cofactor.

It is found in the cytoplasm. This chain is Probable RNA methyltransferase RB6963, found in Rhodopirellula baltica (strain DSM 10527 / NCIMB 13988 / SH1).